A 49-amino-acid polypeptide reads, in one-letter code: Turripeptide OL47 (49 aa).

Residues 28–49 are disordered; it reads RSDTEKKCTGGPDPCPPRQWPD. The span at 40-49 shows a compositional bias: pro residues; that stretch reads DPCPPRQWPD.

Contains 4 disulfide bonds. As to expression, expressed by the venom duct.

It localises to the secreted. Functionally, acts as a neurotoxin by inhibiting an ion channel. The protein is Turripeptide OL47 of Iotyrris olangoensis (Sea snail).